The primary structure comprises 516 residues: Effector protein hopAB1 (516 aa).

Disordered regions lie at residues 1 to 93 and 175 to 259; these read MSGI…AQPA and RALA…DEAL. Positions 16 to 30 are enriched in basic and acidic residues; the sequence is WRADDEPVTERERDS. Residues 31-41 show a composition bias toward polar residues; the sequence is SSGANLTNSPQ. The segment covering 81–90 has biased composition (pro residues); that stretch reads PVEPRQPPEA. Low complexity-rich tracts occupy residues 183–196 and 212–224; these read PAPS…SRSS and QTSS…SSTS.

It belongs to the HopAB family.

It localises to the secreted. In terms of biological role, effector protein that plays different roles depending on the species and plant cultivars that interact with the pathogen. Acts as a virulence determinant by enhancing the development of disease symptoms and bacterial growth. Acts as an avirulence factor by eliciting hypersensitive response (HR) and plant resistance. This is Effector protein hopAB1 (hopAB1) from Pseudomonas syringae pv. syringae (strain B728a).